The following is a 317-amino-acid chain: Signal recognition particle receptor FtsY (317 aa).

GTP is bound by residues 117-124, 199-203, and 263-266; these read GVNGVGKT, DTAGR, and TKLD.

Belongs to the GTP-binding SRP family. FtsY subfamily. Part of the signal recognition particle protein translocation system, which is composed of SRP and FtsY.

Its subcellular location is the cell membrane. The protein resides in the cytoplasm. The enzyme catalyses GTP + H2O = GDP + phosphate + H(+). Involved in targeting and insertion of nascent membrane proteins into the cytoplasmic membrane. Acts as a receptor for the complex formed by the signal recognition particle (SRP) and the ribosome-nascent chain (RNC). The polypeptide is Signal recognition particle receptor FtsY (Deinococcus radiodurans (strain ATCC 13939 / DSM 20539 / JCM 16871 / CCUG 27074 / LMG 4051 / NBRC 15346 / NCIMB 9279 / VKM B-1422 / R1)).